The sequence spans 191 residues: Large ribosomal subunit protein uL6 (191 aa).

The protein belongs to the universal ribosomal protein uL6 family. In terms of assembly, part of the 50S ribosomal subunit.

Its function is as follows. This protein binds to the 23S rRNA, and is important in its secondary structure. It is located near the subunit interface in the base of the L7/L12 stalk, and near the tRNA binding site of the peptidyltransferase center. This chain is Large ribosomal subunit protein uL6, found in Cyanothece sp. (strain PCC 7425 / ATCC 29141).